The primary structure comprises 390 residues: Putative transposase y4qE (390 aa).

The protein belongs to the transposase IS1111A/IS1328/IS1533 family.

This chain is Putative transposase y4qE, found in Sinorhizobium fredii (strain NBRC 101917 / NGR234).